We begin with the raw amino-acid sequence, 527 residues long: Probable malate:quinone oxidoreductase 2 (527 aa).

Belongs to the MQO family. Requires FAD as cofactor.

The enzyme catalyses (S)-malate + a quinone = a quinol + oxaloacetate. It functions in the pathway carbohydrate metabolism; tricarboxylic acid cycle; oxaloacetate from (S)-malate (quinone route): step 1/1. This is Probable malate:quinone oxidoreductase 2 from Pseudomonas putida (strain ATCC 47054 / DSM 6125 / CFBP 8728 / NCIMB 11950 / KT2440).